A 95-amino-acid polypeptide reads, in one-letter code: Large ribosomal subunit protein uL23 (95 aa).

The protein belongs to the universal ribosomal protein uL23 family. As to quaternary structure, part of the 50S ribosomal subunit. Contacts protein L29, and trigger factor when it is bound to the ribosome.

In terms of biological role, one of the early assembly proteins it binds 23S rRNA. One of the proteins that surrounds the polypeptide exit tunnel on the outside of the ribosome. Forms the main docking site for trigger factor binding to the ribosome. This chain is Large ribosomal subunit protein uL23, found in Geobacillus thermodenitrificans (strain NG80-2).